We begin with the raw amino-acid sequence, 391 residues long: Putative gustatory receptor 98a (391 aa).

At 1-31 (MEQMSGELHAASLLYMRRLMKCLGMLPFGQN) the chain is on the cytoplasmic side. The chain crosses the membrane as a helical span at residues 32-52 (LFSKGFCYVLLFVSLGFSSYW). The Extracellular portion of the chain corresponds to 53 to 74 (RFSFDYEFDYDFLNDRFSSTID). The chain crosses the membrane as a helical span at residues 75 to 95 (LSNFVALVLGHAIIVLELLWG). Residues 96–128 (NCSKDVDRQLQAIHSQIKLQLGTSNSTDRVRRY) are Cytoplasmic-facing. A helical transmembrane segment spans residues 129 to 149 (CNWIYGSLIIRWLIFIVVTIY). At 150–173 (SNRALTINATYSELVFLARFSEFT) the chain is on the extracellular side. N-linked (GlcNAc...) asparagine glycosylation is present at Asn157. A helical transmembrane segment spans residues 174–194 (LYCAVILFIYQELIVGGSNVL). Over 195–239 (DELYRTRYEMWSIRRLSLQKLAKLQAIHNSLWQAIRCLECYFQLS) the chain is Cytoplasmic. Residues 240–260 (LITLLMKFFIDTSALPYWLYL) form a helical membrane-spanning segment. Residues 261–272 (SRVEHTRVAVQH) are Extracellular-facing. Residues 273–293 (YVATVECIKLLEIVVPCYLCT) form a helical membrane-spanning segment. Residues 294–347 (RCDAMQRKFLSMFYTVTTDRRSSQLNAALRSLNLQLSQEKYKFSAGGMVDINTE) are Cytoplasmic-facing. Residues 348–368 (MLGKFFFGMISYIVICIQFSI) form a helical membrane-spanning segment. The Extracellular portion of the chain corresponds to 369–391 (NFRAKKMSNEQMSQNITSTSAPI). N-linked (GlcNAc...) asparagine glycosylation occurs at Asn383.

This sequence belongs to the insect chemoreceptor superfamily. Gustatory receptor (GR) family. Gr2a subfamily.

It localises to the cell membrane. In terms of biological role, probable gustatory receptor which mediates acceptance or avoidance behavior, depending on its substrates. This is Putative gustatory receptor 98a (Gr98a) from Drosophila melanogaster (Fruit fly).